A 242-amino-acid chain; its full sequence is UPF0273 protein TM_0370 (242 aa).

The region spanning 3–242 (KRVKTGIPGM…IYPSEGGEGR (240 aa)) is the KaiC domain. 30-37 (GGPGTGKT) is a binding site for ATP.

The protein belongs to the UPF0273 family.

This chain is UPF0273 protein TM_0370, found in Thermotoga maritima (strain ATCC 43589 / DSM 3109 / JCM 10099 / NBRC 100826 / MSB8).